The following is a 933-amino-acid chain: MSNESQVSEAPVNFGANLGYVLDLYDIYLDNPSAVPEDLQVLFSTIKNGEANIATNTEGQSNVTKGDSTIKRVMRLIDNIRQYGHLLADIYPVNRPQRENVPKLNMEDFNLDQETLESISAGIVSEHFKDIYDNAYEAIVRMEKRYKGPIAFEYTHINNNRERVWLKRRIETPYKATLNDNQKIELFKNLAHVEGFEKYLHKNFVGAKRFSIEGVDTLVPMLQQTLRIASDEGIQNIQIGMAHRGRLNVLTHVLEKPYEMMISEFMHIDPMKFLPEDGSLQLTSGWTGDVKYHLGGVKTTQSYGSEQRISLANNPSHLEIVAPVVLGKTRANQDTTDKPGAVTTEFKKSMPILIHGDAAYPGQGINFEAMNLGNLEGYSTGGSLHIITNNRIGFTTEPEDGRSTTYSSDVAKGYDVPIMHVNADNVEATIEAIEIAMAFRKEFNKDVVIDLVGYRRYGHNEMDEPSITNPLQYYEIRKHESVDILYGKQLVNENIISENQMNQIFDDVQNTLRAAHDKIDKNDKMDNPDMQKPDSLAEPIQTKDEEVSYEQLKEINDAMLSYPSDFNVLKKLNKVLEKRREPFESEDGLVDWAQAEQLAFATITQNGRPIRLTGQDSERGTFSHRHAVLHDPDTGAQYVPLHNVPDQKATFEVRNSPLSEAAVVGFEYGYNIQNKSCMTIWEAQYGDFSNMAQMIFDNFLFSSRAKWGERSGLTLFLPHSFEGQGPEHSSARLERFLQLAGENNSTIVNLSSSSNYFHLLRAQAANLGTQSMRPLVVMSPKSLLRNKTVADPISKFTSGKFEPILPEAHDKASVKKVILASGKMFIDLKEYLTKNPNKSILLVAVERLYPFPADEIDALLSELPNLEHVAWVQEEPKNQGAWSFVYPYLKELTTDKYDLSYHGRIQRSAPAEGDGEIHKLVQNMIIEQSTNIN.

The protein belongs to the alpha-ketoglutarate dehydrogenase family. In terms of assembly, homodimer. Part of the 2-oxoglutarate dehydrogenase (OGDH) complex composed of E1 (2-oxoglutarate dehydrogenase), E2 (dihydrolipoamide succinyltransferase) and E3 (dihydrolipoamide dehydrogenase); the complex contains multiple copies of the three enzymatic components (E1, E2 and E3). The cofactor is thiamine diphosphate.

The catalysed reaction is N(6)-[(R)-lipoyl]-L-lysyl-[protein] + 2-oxoglutarate + H(+) = N(6)-[(R)-S(8)-succinyldihydrolipoyl]-L-lysyl-[protein] + CO2. In terms of biological role, E1 component of the 2-oxoglutarate dehydrogenase (OGDH) complex which catalyzes the decarboxylation of 2-oxoglutarate, the first step in the conversion of 2-oxoglutarate to succinyl-CoA and CO(2). The protein is 2-oxoglutarate dehydrogenase E1 component of Staphylococcus saprophyticus subsp. saprophyticus (strain ATCC 15305 / DSM 20229 / NCIMB 8711 / NCTC 7292 / S-41).